Reading from the N-terminus, the 743-residue chain is Glycerol dehydrogenase large subunit (743 aa).

The N-terminal stretch at 1–24 (MRRSHLLATVACATLACAPLAANA) is a signal peptide. The span at 27–41 (APAGSGGSPTSSVPG) shows a compositional bias: low complexity. Disordered stretches follow at residues 27–115 (APAG…GHDD) and 445–474 (ILPV…STGM).

It belongs to the bacterial PQQ dehydrogenase family. Pyrroloquinoline quinone is required as a cofactor.

The protein resides in the secreted. The enzyme catalyses glycerol + A = dihydroxyacetone + AH2. In terms of biological role, catalyzes the oxidation of glycerol to glycerone. Also acts, more slowly, on a number of other polyols including D-sorbitol, D-arabinitol, D-mannitol, meso-erythritol, adonitol and propylene glycol. The sequence is that of Glycerol dehydrogenase large subunit (sldA) from Gluconobacter oxydans (strain 621H) (Gluconobacter suboxydans).